We begin with the raw amino-acid sequence, 1224 residues long: MARAKLPRSPSEGKAGPGDTPAGAAAPEEPHGLSPLLPARGGGSVGSDVGQRVQVEFYVNENTFKERLKLFFIKNQRSSLRIRLFNFSLKLLTCLLYIVRVLLDNPDQGIGCWGCTKYNYTFNGSSSEFHWAPILWVERKMALWVIQVIVATISFLETMLIIYLSYKGNIWEQIFHVSFVLEMINTLPFIITVFWPPLRNLFIPVFLNCWLAKHALENMINDFHRAILRTQSAMFNQVLILFCTLLCLVFTGTCGIQHLERAGGNLNLLTSFYFCIVTFSTVGFGDVTPKIWPSQLLVVILICVTLVVLPLQFEELVYLWMERQKSGGNYSRHRARTEKHVVLCVSSLKIDLLMDFLNEFYAHPRLQDYYVVILCPSEMDVQVRRVLQIPLWSQRVIYLQGSALKDQDLMRAKMDNGEACFILSSRNEVDRTAADHQTILRAWAVKDFAPNCPLYVQILKPENKFHVKFADHVVCEEECKYAMLALNCICPATSTLITLLVHTSRGQEGQESPEQWQRTYGRCSGNEVYHIRMGDSKFFREYEGKSFTYAAFHAHKKYGVCLIGLKREENKSILLNPGPRHILAASDTCFYINITKEENSAFIFKQEEKQKRRGLAGQALYEGPSRLPVHSIIASMGTVAMDLQNTDCRPSQGGSGGDGTKLTLPTENGSGSRRPSIAPVLELADSSALLPCDLLSDQSEDEVTPSDDEGLSVVEYVKGYPPNSPYIGSSPTLCHLLPVKAPFCCLRLDKGCKHNSYEDAKAYGFKNKLIIVSAETAGNGLYNFIVPLRAYYRSRRELNPIVLLLDNKPDHHFLEAICCFPMVYYMEGSVDNLDSLLQCGIIYADNLVVVDKESTMSAEEDYMADAKTIVNVQTMFRLFPSLSITTELTHPSNMRFMQFRAKDSYSLALSKLEKQERENGSNLAFMFRLPFAAGRVFSISMLDTLLYQSFVKDYMITITRLLLGLDTTPGSGYLCAMKVTEDDLWIRTYGRLFQKLCSSSAEIPIGIYRTECHVFSEPHDVRAQSQISVNMEDCEDTREAKGPWGTRAASGSGSTHGRHGGSADPVEHPLLRRKSLQWARKLSRKSTKQAGKAPVATDWITQQRLSLYRRSERQELSELVKNRMKHLGLPTTGYEDVANLTASDVMNRVNLGYLQDEMNDHHQNTLSYVLINPPPDTRLEPNDIVYLIRSDPLAHVASSSQSRKSSCSNKLSSCNPETRDETQL.

The segment at 1-37 (MARAKLPRSPSEGKAGPGDTPAGAAAPEEPHGLSPLL) is disordered. The Cytoplasmic segment spans residues 1-79 (MARAKLPRSP…LFFIKNQRSS (79 aa)). Positions 13 to 27 (GKAGPGDTPAGAAAP) are enriched in low complexity. A helical membrane pass occupies residues 80 to 112 (LRIRLFNFSLKLLTCLLYIVRVLLDNPDQGIGC). Over 113 to 139 (WGCTKYNYTFNGSSSEFHWAPILWVER) the chain is Extracellular. Asn-119 and Asn-123 each carry an N-linked (GlcNAc...) asparagine glycan. Residues 140-164 (KMALWVIQVIVATISFLETMLIIYL) traverse the membrane as a helical segment. The Cytoplasmic segment spans residues 165-178 (SYKGNIWEQIFHVS). The helical transmembrane segment at 179-194 (FVLEMINTLPFIITVF) threads the bilayer. Residues 195–201 (WPPLRNL) lie on the Extracellular side of the membrane. The chain crosses the membrane as a helical span at residues 202–219 (FIPVFLNCWLAKHALENM). At 220-232 (INDFHRAILRTQS) the chain is on the cytoplasmic side. A helical transmembrane segment spans residues 233-260 (AMFNQVLILFCTLLCLVFTGTCGIQHLE). The Extracellular segment spans residues 261-267 (RAGGNLN). An intramembrane region (pore-forming) is located at residues 268–288 (LLTSFYFCIVTFSTVGFGDVT). K(+) is bound by residues Val-282 and Gly-283. Over 289-290 (PK) the chain is Extracellular. Residues 291-324 (IWPSQLLVVILICVTLVVLPLQFEELVYLWMERQ) form a helical membrane-spanning segment. The Cytoplasmic portion of the chain corresponds to 325–1224 (KSGGNYSRHR…NPETRDETQL (900 aa)). In terms of domain architecture, RCK N-terminal 1 spans 338 to 474 (EKHVVLCVSS…FHVKFADHVV (137 aa)). 4 residues coordinate Na(+): Leu-499, His-502, Ser-524, and Asn-526. A disordered region spans residues 644–675 (QNTDCRPSQGGSGGDGTKLTLPTENGSGSRRP). Over residues 663-673 (TLPTENGSGSR) the composition is skewed to polar residues. The Zn(2+) site is built by Cys-744 and Cys-745. Arg-747 and Lys-750 together coordinate K(+). The Na(+) site is built by Arg-747 and Lys-750. Cys-752 and His-754 together coordinate Zn(2+). K(+) contacts are provided by Asn-755, Tyr-757, Tyr-763, and Gly-764. Tyr-757 provides a ligand contact to Na(+). Phe-765 contributes to the Na(+) binding site. The RCK N-terminal 2 domain occupies 767 to 907 (NKLIIVSAET…QFRAKDSYSL (141 aa)). K(+) contacts are provided by Ser-773, Leu-804, Asp-806, Gly-828, and Asp-851. 2 disordered regions span residues 1038–1066 (REAK…ADPV) and 1198–1224 (SSSQ…ETQL). Composition is skewed to low complexity over residues 1045–1055 (GTRAASGSGST) and 1198–1215 (SSSQ…SSCN).

This sequence belongs to the potassium channel family. Calcium-activated (TC 1.A.1.3) subfamily. KCa4.1/KCNT1 sub-subfamily. In terms of assembly, homotetramer; which constitutes the Na(+)-activated K(+) channel. Interacts with KCNT2; these heterodimer channels differ from the homomers in their unitary conductance, kinetic behavior, subcellular localization, and response to activation of protein kinase C. Interacts (via C-terminus) with FMR1; this interaction alters gating properties of KCNT1. Interacts with CRBN via its cytoplasmic C-terminus. Post-translationally, phosphorylated by protein kinase C. Phosphorylation of the C-terminal domain increases channel activity. In terms of tissue distribution, enriched in the brainstem and olfactory bulb and detected at significant levels in four different brain regions.

Its subcellular location is the cell membrane. It catalyses the reaction K(+)(in) = K(+)(out). Activated by high intracellular Na(+). In addition to activation by Na(+), is cooperatively activated by intracellular Cl(-) levels. Inhibited by Zn(2+). Activated upon stimulation of G-protein coupled receptors, such as CHRM1 and GRIA1. In terms of biological role, sodium-activated K(+) channel. Acts as an important mediator of neuronal membrane excitability. Contributes to the delayed outward currents. Regulates neuronal bursting in sensory neurons. Contributes to synaptic development and plasticity. This chain is Potassium channel subfamily T member 1 (Kcnt1), found in Mus musculus (Mouse).